Reading from the N-terminus, the 1027-residue chain is Translation initiation factor IF-2 (1027 aa).

The segment at 31–433 (YVKSASSTVE…GGVRLPRGNG (403 aa)) is disordered. Residues 57-68 (KKGGGDSNGRAG) are compositionally biased toward gly residues. The span at 110 to 122 (GPKPGPKPGPKAP) shows a compositional bias: pro residues. Residues 123–145 (APETKPFEEAPAPAAKADAPAQP) show a composition bias toward low complexity. Residues 148 to 171 (EQPRSEQPRSEQPRSEQPRSERSG) are compositionally biased toward basic and acidic residues. 2 stretches are compositionally biased toward pro residues: residues 174–188 (PGGPKPGPKPGPKPG) and 201–212 (PPKPQSPKPGPR). The segment covering 237–268 (PGGGQRQGGQGPGRGGPQGGRPDRQGGGGQGA) has biased composition (gly residues). Over residues 293–302 (GMMPPRPNPG) the composition is skewed to pro residues. A compositionally biased stretch (gly residues) spans 311-397 (SGGGPGGGRG…GAAGAFGRPG (87 aa)). The span at 401 to 410 (RRGRKSKRQK) shows a compositional bias: basic residues. In terms of domain architecture, tr-type G spans 523–695 (SRPPVVTVMG…ILLTADATLD (173 aa)). Positions 532–539 (GHVDHGKT) are G1. Residue 532-539 (GHVDHGKT) participates in GTP binding. Residues 557 to 561 (GITQH) form a G2 region. The segment at 582 to 585 (DTPG) is G3. GTP is bound by residues 582–586 (DTPGH) and 636–639 (NKID). The tract at residues 636 to 639 (NKID) is G4. The tract at residues 672–674 (SAR) is G5.

This sequence belongs to the TRAFAC class translation factor GTPase superfamily. Classic translation factor GTPase family. IF-2 subfamily.

It localises to the cytoplasm. In terms of biological role, one of the essential components for the initiation of protein synthesis. Protects formylmethionyl-tRNA from spontaneous hydrolysis and promotes its binding to the 30S ribosomal subunits. Also involved in the hydrolysis of GTP during the formation of the 70S ribosomal complex. In Saccharopolyspora erythraea (strain ATCC 11635 / DSM 40517 / JCM 4748 / NBRC 13426 / NCIMB 8594 / NRRL 2338), this protein is Translation initiation factor IF-2.